A 42-amino-acid polypeptide reads, in one-letter code: Lanthionine-containing peptide SapB precursor RamS (42 aa).

Residues 1-21 constitute a propeptide that is removed on maturation; it reads MNLFDLQSMETPKEEAMGDVE. The interval 1–21 is disordered; the sequence is MNLFDLQSMETPKEEAMGDVE. 2 cross-links (lanthionine (Ser-Cys)) span residues 24-31 and 34-41; these read SRASLLLC and SSLSITTC. Ser-27 and Ser-37 each carry 2,3-didehydroalanine (Ser).

This sequence belongs to the lanthionine-containing morphogen family. Maturation involves the enzymatic conversion of Ser into dehydrated AA and the formation of thioether bonds with cysteine, probably by RamC. This is followed by membrane translocation and cleavage of the modified precursor. The RamS precursor protein (detected by an anti-propeptide antibody and by a C-terminal His-tag) is detected from at least 16 hours post-germination; its apparent molecular weight decreases starting from about 34 hours, when its probable modifying enzyme ramC is transcribed. Surfactin, a B.subtilis cyclic lipopeptide antibiotic which prevents aerial hyphae formation in S.coelicolor, decreases localization of RamS precursor protein to the cell membrane, suggesting that processing only occurs at the cell membrane.

The protein resides in the cell membrane. The protein localises to the secreted. It localises to the spore wall. Functionally, stably accumulated precursor of SapB. Lanthionine-containing peptide devoid of antibiotic properties. A surface active peptide involved in the efficient formation of aerial mycelium when cells are grown in rich media. Has an overlapping function with the surface-active chaplin proteins; chaplins are essential on minimal medium while on rich medium both chaplins and SapB are required for efficient aerial hyphae formation. Required under conditions of high osmolarity where it may change the physical properties of the chaplin layer to allow hyphae to grow into air. Suggested to self-assemble at air-water interfaces, thus providing a film of surfactant through which nascent aerial hyphae can emerge; the aerial hyphae differentiate further into spores. Application to bald mutants (bld, unable to make aerial hyphae) restores hyphae growth. Application to chaplin negative mutants as well as ramC-ramS-ramA-ramB and ramR deletions also restores aerial hyphae growth and sporulation. Reduces surface tension of water from 72 to 30 mJ/m(2). This chain is Lanthionine-containing peptide SapB precursor RamS (ramS), found in Streptomyces coelicolor (strain ATCC BAA-471 / A3(2) / M145).